We begin with the raw amino-acid sequence, 426 residues long: Serine--tRNA ligase (426 aa).

Position 233-235 (233-235 (TAE)) interacts with L-serine. 264–266 (RSE) contacts ATP. An L-serine-binding site is contributed by Glu-287. 351-354 (EISS) provides a ligand contact to ATP. Residue Ser-387 coordinates L-serine.

This sequence belongs to the class-II aminoacyl-tRNA synthetase family. Type-1 seryl-tRNA synthetase subfamily. Homodimer. The tRNA molecule binds across the dimer.

The protein resides in the cytoplasm. The catalysed reaction is tRNA(Ser) + L-serine + ATP = L-seryl-tRNA(Ser) + AMP + diphosphate + H(+). It catalyses the reaction tRNA(Sec) + L-serine + ATP = L-seryl-tRNA(Sec) + AMP + diphosphate + H(+). It functions in the pathway aminoacyl-tRNA biosynthesis; selenocysteinyl-tRNA(Sec) biosynthesis; L-seryl-tRNA(Sec) from L-serine and tRNA(Sec): step 1/1. In terms of biological role, catalyzes the attachment of serine to tRNA(Ser). Is also able to aminoacylate tRNA(Sec) with serine, to form the misacylated tRNA L-seryl-tRNA(Sec), which will be further converted into selenocysteinyl-tRNA(Sec). The polypeptide is Serine--tRNA ligase (Pseudomonas paraeruginosa (strain DSM 24068 / PA7) (Pseudomonas aeruginosa (strain PA7))).